Consider the following 206-residue polypeptide: uncharacterized protein (206 aa).

Positions 1 to 18 (MKTYSLLLGLFISFGVLA) are cleaved as a signal peptide.

This is an uncharacterized protein from Haemophilus influenzae (strain ATCC 51907 / DSM 11121 / KW20 / Rd).